The primary structure comprises 183 residues: Triggering receptor expressed on myeloid cells 3 (183 aa).

Positions 1–19 are cleaved as a signal peptide; it reads MSPLLLWLGLMLCVSGLQA. The Extracellular segment spans residues 20-138; that stretch reads GDEEEHKCFL…AWCQGKPVMV (119 aa). One can recognise an Ig-like V-type domain in the interval 30–128; sequence EGENLTLTCP…VIILRQRIRL (99 aa). An N-linked (GlcNAc...) asparagine glycan is attached at Asn-33. Cys-38 and Cys-110 are joined by a disulfide. A helical membrane pass occupies residues 139–159; the sequence is IVLTCGFILNKGLVFSVLFVF. Residues 160–183 lie on the Cytoplasmic side of the membrane; sequence LCKAGPKVLQPSKTSKVQGVSEKQ.

As to quaternary structure, interacts with TYROBP/DAP12. In terms of tissue distribution, expressed in macrophages and in T-cells.

It is found in the cell membrane. Forms a receptor signaling complex with TYROBP/DAP12 which mediates activation of macrophages as part of the innate immune response. The chain is Triggering receptor expressed on myeloid cells 3 from Mus musculus (Mouse).